A 248-amino-acid chain; its full sequence is Probable transcriptional regulatory protein Ccel_0181 (248 aa).

The protein belongs to the TACO1 family.

It is found in the cytoplasm. The sequence is that of Probable transcriptional regulatory protein Ccel_0181 from Ruminiclostridium cellulolyticum (strain ATCC 35319 / DSM 5812 / JCM 6584 / H10) (Clostridium cellulolyticum).